The sequence spans 290 residues: 4-diphosphocytidyl-2-C-methyl-D-erythritol kinase (290 aa).

K14 is a catalytic residue. An ATP-binding site is contributed by 103-113 (PMGGGLGGGSS). D145 is an active-site residue.

It belongs to the GHMP kinase family. IspE subfamily. As to quaternary structure, homodimer.

It catalyses the reaction 4-CDP-2-C-methyl-D-erythritol + ATP = 4-CDP-2-C-methyl-D-erythritol 2-phosphate + ADP + H(+). It functions in the pathway isoprenoid biosynthesis; isopentenyl diphosphate biosynthesis via DXP pathway; isopentenyl diphosphate from 1-deoxy-D-xylulose 5-phosphate: step 3/6. Its function is as follows. Catalyzes the phosphorylation of the position 2 hydroxy group of 4-diphosphocytidyl-2C-methyl-D-erythritol. In Pectobacterium atrosepticum (strain SCRI 1043 / ATCC BAA-672) (Erwinia carotovora subsp. atroseptica), this protein is 4-diphosphocytidyl-2-C-methyl-D-erythritol kinase.